A 414-amino-acid chain; its full sequence is ORC1-type DNA replication protein 1 (414 aa).

ATP-binding positions include 70-74, Y213, and R225; that span reads TGKTA.

The protein belongs to the CDC6/cdc18 family.

Its function is as follows. Involved in regulation of DNA replication. This chain is ORC1-type DNA replication protein 1 (cdc6-1), found in Methanosarcina acetivorans (strain ATCC 35395 / DSM 2834 / JCM 12185 / C2A).